Reading from the N-terminus, the 185-residue chain is Ribosome-recycling factor (185 aa).

The protein belongs to the RRF family.

It localises to the cytoplasm. Functionally, responsible for the release of ribosomes from messenger RNA at the termination of protein biosynthesis. May increase the efficiency of translation by recycling ribosomes from one round of translation to another. The chain is Ribosome-recycling factor from Yersinia enterocolitica serotype O:8 / biotype 1B (strain NCTC 13174 / 8081).